The chain runs to 80 residues: Late cornified envelope protein 6A (80 aa).

Polar residues predominate over residues 1–10; the sequence is MSQQKQQSWK. Disordered regions lie at residues 1–21 and 35–60; these read MSQQKQQSWKPPNVPKCSPPQ and GAPHSEGCHSSSQRPEVQKPRRARQK.

The protein belongs to the LCE family.

In terms of biological role, precursors of the cornified envelope of the stratum corneum. The protein is Late cornified envelope protein 6A (LCE6A) of Homo sapiens (Human).